Consider the following 1673-residue polypeptide: Glutamine and serine-rich protein 1 (1673 aa).

Disordered regions lie at residues 265 to 322 (VIPS…SSQA), 411 to 543 (DQTR…KSYV), 872 to 892 (RHMSPNFTPPKPQNMNNLSIN), 923 to 961 (QDLPSGMVSPVPGANQDDHEKNSENIKNPPNVNQEPKEG), 1050 to 1081 (DENANLKQIKRNMPLKRSVSKGPDVPGAQYSS), 1149 to 1182 (VIRPPCPGPLSPQSVAGAPVSDSGSASPPKKAEE), 1216 to 1272 (LSAL…EQLA), and 1390 to 1476 (KSKV…PPPI). The segment covering 289–309 (SSKTPKSQSVVSPELTQSYTK) has biased composition (polar residues). Low complexity-rich tracts occupy residues 310–322 (SSQNQSSVNSSQA) and 411–458 (DQTR…PSDS). Polar residues predominate over residues 459–539 (YTSGQNQTLA…MQNSRTTADS (81 aa)). Positions 947–956 (NIKNPPNVNQ) are enriched in polar residues. The segment covering 1222 to 1233 (NSEKRLKTEGDK) has biased composition (basic and acidic residues). 2 stretches are compositionally biased toward polar residues: residues 1259-1272 (KPSQPEATQPEQLA) and 1397-1411 (ARTTHTKASGGSKVS). Positions 1435–1451 (TKAEPPPKKRKQWKEEF) are enriched in basic and acidic residues. The segment covering 1452–1462 (SSSQSDSSPDM) has biased composition (low complexity).

Its subcellular location is the chromosome. Functionally, plays an essential role in the protection and maintenance of transcriptional and developmental programs. Protects many bivalent promoters and poised enhancers from hypermethylation, showing a marked preference for these regulatory elements over other types of promoters or enhancers. Mechanistically, cooperates with tet1 and binds to DNA in a common complex to inhibit the binding of dnmt3a/3b and therefore de novo methylation. The chain is Glutamine and serine-rich protein 1 (qser1) from Xenopus laevis (African clawed frog).